The following is a 229-amino-acid chain: Tubulin-specific chaperone B (229 aa).

The 43-residue stretch at 170 to 212 (GATKFKEGVWVGVKYDEPVGKNDGSVAGVRYFDCDPKYGGFVR) folds into the CAP-Gly domain.

It belongs to the TBCB family. As to quaternary structure, supercomplex made of cofactors A to E. Cofactors A and D function by capturing and stabilizing tubulin in a quasi-native conformation. Cofactor E binds to the cofactor D-tubulin complex; interaction with cofactor C then causes the release of tubulin polypeptides that are committed to the native state.

The protein localises to the cytoplasm. It is found in the cytoskeleton. Binds to alpha-tubulin folding intermediates after their interaction with cytosolic chaperonin in the pathway leading from newly synthesized tubulin to properly folded heterodimer. This Caenorhabditis elegans protein is Tubulin-specific chaperone B.